Consider the following 267-residue polypeptide: Thiamine thiazole synthase (267 aa).

NAD(+) is bound by residues Ser41, 60-61 (ER), Gly68, Val132, and 160-162 (HVD). Positions 162 and 177 each coordinate Fe cation. Residue Met227 coordinates NAD(+). Arg237 contacts glycine.

This sequence belongs to the THI4 family. As to quaternary structure, homooctamer; tetramer of dimers. It depends on Fe(2+) as a cofactor.

It catalyses the reaction hydrogen sulfide + glycine + NAD(+) = ADP-5-ethyl-4-methylthiazole-2-carboxylate + nicotinamide + 3 H2O + H(+). Its pathway is cofactor biosynthesis; thiamine diphosphate biosynthesis. Its function is as follows. Involved in the biosynthesis of the thiazole moiety of thiamine. Catalyzes the conversion of NAD and glycine to adenosine diphosphate 5-(2-hydroxyethyl)-4-methylthiazole-2-carboxylate (ADT), an adenylated thiazole intermediate, using free sulfide as a source of sulfur. This chain is Thiamine thiazole synthase, found in Saccharolobus islandicus (strain Y.N.15.51 / Yellowstone #2) (Sulfolobus islandicus).